The chain runs to 79 residues: Reactive oxygen species modulator 1 (79 aa).

The chain crosses the membrane as a helical span at residues 22–44 (GFVMGCAVGMAAGALFGTFSCLR). A sufficient for antibacterial activity region spans residues 42-60 (CLRIGMRGRELMGGIGKTM).

Belongs to the MGR2 family.

It localises to the mitochondrion inner membrane. In terms of biological role, has antibacterial activity against a variety of bacteria including S.aureus, P.aeruginosa and M.tuberculosis. Acts by inducing bacterial membrane breakage. Its function is as follows. Induces production of reactive oxygen species (ROS) which are necessary for cell proliferation. May play a role in inducing oxidative DNA damage and replicative senescence. May play a role in the coordination of mitochondrial morphology and cell proliferation. This chain is Reactive oxygen species modulator 1 (ROMO1), found in Bos taurus (Bovine).